A 253-amino-acid chain; its full sequence is MSKSDVFHLGLTKNDLQGATLAIVPGDPERVEKIAALMDKPVKLASHREFTSWRAELDGKPVIVCSTGIGGPSTSIAVEELAHVGVRTFLRIGTTGAIQPHINVGDVLVTTGSVRLDGASLHFAPMEFPAVADFACTTALVEAAKSIGATTHIGVTASSDTFYPGQERYDTFSGRVVSRFKGSMEEWQAMGVMNYEMESATLLTMCASQGLRAGMVAGVIVNRTQQEIPNAETMKQTESHAVKIVVEAARRLL.

It belongs to the PNP/UDP phosphorylase family. In terms of assembly, homohexamer.

The protein localises to the cytoplasm. The enzyme catalyses uridine + phosphate = alpha-D-ribose 1-phosphate + uracil. It participates in pyrimidine metabolism; UMP biosynthesis via salvage pathway; uracil from uridine (phosphorylase route): step 1/1. In terms of biological role, catalyzes the reversible phosphorylytic cleavage of uridine to uracil and ribose-1-phosphate. This is Uridine phosphorylase (udp) from Klebsiella aerogenes (Enterobacter aerogenes).